The primary structure comprises 494 residues: Arp2/3 complex-activating protein rickA (494 aa).

The interval 312 to 494 is disordered; the sequence is PLENNIPPPP…RNSQKPSFVR (183 aa). A compositionally biased stretch (pro residues) spans 317–357; sequence IPPPPPPPPPLPDNNIPPPPPPPPPLPDNNIPPPPPPPPMA. Residues 383–400 form the WH2 domain; that stretch reads DTSDLMREIAGPKKLKKV. The central and acidic domains stretch occupies residues 421–454; it reads VNKPSGLESIFARRVAIEMSDSSSSESDSGNWSD. The segment covering 440-456 has biased composition (low complexity); it reads SDSSSSESDSGNWSDVS. The segment covering 477–494 has biased composition (polar residues); the sequence is THAQKINNRNSQKPSFVR.

The protein localises to the cell surface. Functionally, recruits and activates the Arp2/3 complex, which in turn leads to actin polymerization, promoting Rickettsia motility during infection. This chain is Arp2/3 complex-activating protein rickA (rickA), found in Rickettsia rickettsii.